Consider the following 118-residue polypeptide: Acidic elicitin A1 (118 aa).

An N-terminal signal peptide occupies residues 1–20 (MNFRALFAATVAALVGSTSA). Disulfide bonds link cysteine 23–cysteine 91, cysteine 47–cysteine 76, and cysteine 71–cysteine 115.

Belongs to the elicitin family.

The protein resides in the secreted. Functionally, induces local and distal defense responses (incompatible hypersensitive reaction) in plants from the solanaceae and cruciferae families. Elicits leaf necrosis and causes the accumulation of pathogenesis-related proteins. Might interact with the lipidic molecules of the plasma membrane. The protein is Acidic elicitin A1 (B14) of Phytophthora cryptogea.